A 240-amino-acid chain; its full sequence is Uridylate kinase (240 aa).

12-15 (KLSG) serves as a coordination point for ATP. An involved in allosteric activation by GTP region spans residues 20-25 (GEKGFG). Gly-54 contacts UMP. ATP-binding residues include Gly-55 and Arg-59. UMP is bound by residues Asp-74 and 135–142 (TGSPYFST). Positions 163, 169, and 172 each coordinate ATP.

The protein belongs to the UMP kinase family. Homohexamer.

The protein localises to the cytoplasm. The catalysed reaction is UMP + ATP = UDP + ADP. Its pathway is pyrimidine metabolism; CTP biosynthesis via de novo pathway; UDP from UMP (UMPK route): step 1/1. Its activity is regulated as follows. Allosterically activated by GTP. Inhibited by UTP. Catalyzes the reversible phosphorylation of UMP to UDP. In Limosilactobacillus reuteri (Lactobacillus reuteri), this protein is Uridylate kinase.